The sequence spans 263 residues: Sulfur carrier protein FdhD (263 aa).

Cysteine 107 acts as the Cysteine persulfide intermediate in catalysis.

The protein belongs to the FdhD family.

It is found in the cytoplasm. Required for formate dehydrogenase (FDH) activity. Acts as a sulfur carrier protein that transfers sulfur from IscS to the molybdenum cofactor prior to its insertion into FDH. This is Sulfur carrier protein FdhD from Geobacillus kaustophilus (strain HTA426).